The following is a 97-amino-acid chain: Large ribosomal subunit protein eL21 (97 aa).

Belongs to the eukaryotic ribosomal protein eL21 family.

This Archaeoglobus fulgidus (strain ATCC 49558 / DSM 4304 / JCM 9628 / NBRC 100126 / VC-16) protein is Large ribosomal subunit protein eL21 (rpl21e).